Here is an 884-residue protein sequence, read N- to C-terminus: Alanine--tRNA ligase (884 aa).

Zn(2+) is bound by residues histidine 574, histidine 578, cysteine 675, and histidine 679.

The protein belongs to the class-II aminoacyl-tRNA synthetase family. It depends on Zn(2+) as a cofactor.

The protein resides in the cytoplasm. The catalysed reaction is tRNA(Ala) + L-alanine + ATP = L-alanyl-tRNA(Ala) + AMP + diphosphate. Catalyzes the attachment of alanine to tRNA(Ala) in a two-step reaction: alanine is first activated by ATP to form Ala-AMP and then transferred to the acceptor end of tRNA(Ala). Also edits incorrectly charged Ser-tRNA(Ala) and Gly-tRNA(Ala) via its editing domain. The chain is Alanine--tRNA ligase from Ralstonia nicotianae (strain ATCC BAA-1114 / GMI1000) (Ralstonia solanacearum).